The following is a 234-amino-acid chain: UPF0309 protein lmo0025 (234 aa).

The region spanning 31 to 205 (VADSIMNDGI…ELMLEKGYTP (175 aa)) is the SIS domain.

This sequence belongs to the UPF0309 family.

The polypeptide is UPF0309 protein lmo0025 (Listeria monocytogenes serovar 1/2a (strain ATCC BAA-679 / EGD-e)).